The sequence spans 180 residues: Large ribosomal subunit protein uL5 (180 aa).

This sequence belongs to the universal ribosomal protein uL5 family. As to quaternary structure, part of the 50S ribosomal subunit; part of the 5S rRNA/L5/L18/L25 subcomplex. Contacts the 5S rRNA and the P site tRNA. Forms a bridge to the 30S subunit in the 70S ribosome.

In terms of biological role, this is one of the proteins that bind and probably mediate the attachment of the 5S RNA into the large ribosomal subunit, where it forms part of the central protuberance. In the 70S ribosome it contacts protein S13 of the 30S subunit (bridge B1b), connecting the 2 subunits; this bridge is implicated in subunit movement. Contacts the P site tRNA; the 5S rRNA and some of its associated proteins might help stabilize positioning of ribosome-bound tRNAs. The polypeptide is Large ribosomal subunit protein uL5 (Chlamydia trachomatis serovar A (strain ATCC VR-571B / DSM 19440 / HAR-13)).